The primary structure comprises 781 residues: Mitogen-activated protein kinase 7 (781 aa).

A disordered region spans residues 1–27; sequence MAEPLKEDDGEDGSGEPPGPVKAEPAG. N-acetylalanine is present on Ala2. The tract at residues 2 to 77 is required for cytoplasmic targeting; it reads AEPLKEDDGE…VVSSARRRLT (76 aa). Residues 55-347 enclose the Protein kinase domain; that stretch reads YEIIETIGNG…AAAALRHPFL (293 aa). Residues 61 to 69 and Lys84 contribute to the ATP site; that span reads IGNGAYGVV. The required for binding to MAP2K5 stretch occupies residues 78–139; the sequence is GQQVAIKKIP…FKSVYVVLDL (62 aa). The segment at 140–406 is necessary for oligomerization; that stretch reads MESDLHQIIH…QQIRFQPSLQ (267 aa). The Proton acceptor role is filled by Asp182. The TXY motif lies at 219-221; the sequence is TEY. The tract at residues 402-708 is disordered; that stretch reads QPSLQPVASE…PKGSGAGYGV (307 aa). The segment at 407-781 is may not be required for kinase activity; required to stimulate MEF2C activity; the sequence is PVASEPGCPD…LADLPDLQEP (375 aa). Pro residues-rich tracts occupy residues 433–445 and 454–463; these read SPPP…PGPA and QPPPPASEPA. Positions 476–486 are enriched in low complexity; sequence KAALKAALLKS. 3 stretches are compositionally biased toward basic and acidic residues: residues 502–519, 527–544, and 563–573; these read PEPR…EREE, RAKE…KERG, and DNDRSLLERWT. Positions 505–539 match the Nuclear localization signal motif; sequence RKPVTAQERQREREEKRRRRQERAKEREKRRQERE. Pro residues-rich tracts occupy residues 578 to 594 and 601 to 614; these read PPAP…PPAG and GPLP…PAPA. 2 stretches are compositionally biased toward low complexity: residues 615–632 and 642–652; these read AGPA…LAPQ and GPSALSVLPYF. Residues 653-664 show a composition bias toward pro residues; it reads PSGPPPPDPGGA. A compositionally biased stretch (polar residues) spans 668 to 685; the sequence is STSESPDVTLVTQQLSKS. Ser685 is modified (phosphoserine). Residue Thr698 is modified to Phosphothreonine.

Belongs to the protein kinase superfamily. CMGC Ser/Thr protein kinase family. MAP kinase subfamily. As to quaternary structure, interacts with MAP2K5. Forms oligomers. Interacts with MEF2A, MEF2C and MEF2D; the interaction phosphorylates the MEF2s and enhances transcriptional activity of MEF2A, MEF2C but not MEF2D. Interacts with SGK1. Interacts with PML. Interacts (via N-terminal half) with HSP90AB1-CDC37 chaperone complex in resting cells; the interaction is MAP2K5-independent and prevents MAPK7 from ubiquitination and proteasomal degradation. Interacts with STUB1/CHIP; the interaction is enhanced in the presence of IGF1 or MAP2K5 and promotes STUB1/CHIP E3 ligase activity. Mg(2+) serves as cofactor. Dually phosphorylated on Thr-219 and Tyr-221, which activates the enzyme.

The protein localises to the cytoplasm. It is found in the nucleus. It localises to the PML body. The enzyme catalyses L-seryl-[protein] + ATP = O-phospho-L-seryl-[protein] + ADP + H(+). The catalysed reaction is L-threonyl-[protein] + ATP = O-phospho-L-threonyl-[protein] + ADP + H(+). With respect to regulation, activated by tyrosine and threonine phosphorylation. Activated in response to hyperosmolarity, hydrogen peroxide, and epidermal growth factor (EGF). Plays a role in various cellular processes such as proliferation, differentiation and cell survival. The upstream activator of MAPK7 is the MAPK kinase MAP2K5. Upon activation, it translocates to the nucleus and phosphorylates various downstream targets including MEF2C. EGF activates MAPK7 through a Ras-independent and MAP2K5-dependent pathway. As part of the MAPK/ERK signaling pathway, acts as a negative regulator of apoptosis in cardiomyocytes via interaction with STUB1/CHIP and promotion of STUB1-mediated ubiquitination and degradation of ICER-type isoforms of CREM. May have a role in muscle cell differentiation. May be important for endothelial function and maintenance of blood vessel integrity. MAP2K5 and MAPK7 interact specifically with one another and not with MEK1/ERK1 or MEK2/ERK2 pathways. Phosphorylates SGK1 at Ser-78 and this is required for growth factor-induced cell cycle progression. Involved in the regulation of p53/TP53 by disrupting the PML-MDM2 interaction. The chain is Mitogen-activated protein kinase 7 (MAPK7) from Bos taurus (Bovine).